A 122-amino-acid polypeptide reads, in one-letter code: Large ribosomal subunit protein uL18 (122 aa).

The interval 1–24 (MSTLSRKQQTQKRHRRLRRHLSGT) is disordered. Basic residues predominate over residues 9 to 21 (QTQKRHRRLRRHL).

It belongs to the universal ribosomal protein uL18 family. As to quaternary structure, part of the 50S ribosomal subunit; part of the 5S rRNA/L5/L18/L25 subcomplex. Contacts the 5S and 23S rRNAs.

In terms of biological role, this is one of the proteins that bind and probably mediate the attachment of the 5S RNA into the large ribosomal subunit, where it forms part of the central protuberance. In Synechococcus sp. (strain WH7803), this protein is Large ribosomal subunit protein uL18.